A 199-amino-acid polypeptide reads, in one-letter code: Recombination protein RecR (199 aa).

The C4-type zinc-finger motif lies at 58–73 (CSVCGNLTDTDVCPLC). One can recognise a Toprim domain in the interval 81–176 (SVICVVEDPR…KTTRIAHGIP (96 aa)).

Belongs to the RecR family.

Functionally, may play a role in DNA repair. It seems to be involved in an RecBC-independent recombinational process of DNA repair. It may act with RecF and RecO. This chain is Recombination protein RecR, found in Acetivibrio thermocellus (strain ATCC 27405 / DSM 1237 / JCM 9322 / NBRC 103400 / NCIMB 10682 / NRRL B-4536 / VPI 7372) (Clostridium thermocellum).